The chain runs to 134 residues: Global transcriptional regulator Spx (134 aa).

Residues Cys-10 and Cys-13 are joined by a disulfide bond.

This sequence belongs to the ArsC family. Spx subfamily. In terms of assembly, interacts with the C-terminal domain of the alpha subunit of the RNAP.

It localises to the cytoplasm. Functionally, global transcriptional regulator that plays a key role in stress response and exerts either positive or negative regulation of genes. Acts by interacting with the C-terminal domain of the alpha subunit of the RNA polymerase (RNAP). This interaction can enhance binding of RNAP to the promoter region of target genes and stimulate their transcription, or block interaction of RNAP with activator. The polypeptide is Global transcriptional regulator Spx (Streptococcus pyogenes serotype M6 (strain ATCC BAA-946 / MGAS10394)).